A 473-amino-acid chain; its full sequence is Siroheme synthase (473 aa).

Residues 1–206 (MDYLPIFMKI…GNTGEAEALL (206 aa)) form a precorrin-2 dehydrogenase /sirohydrochlorin ferrochelatase region. Residues 22–23 (TV) and 43–44 (PK) each bind NAD(+). A uroporphyrinogen-III C-methyltransferase region spans residues 223-473 (GEVYIIGAGP…KSLLDDRVPA (251 aa)). Pro232 is a binding site for S-adenosyl-L-methionine. Asp255 serves as the catalytic Proton acceptor. Catalysis depends on Lys277, which acts as the Proton donor. S-adenosyl-L-methionine contacts are provided by residues 308-310 (GGD), Ile313, 338-339 (TA), Met390, and Gly419.

This sequence in the N-terminal section; belongs to the precorrin-2 dehydrogenase / sirohydrochlorin ferrochelatase family. In the C-terminal section; belongs to the precorrin methyltransferase family.

It catalyses the reaction uroporphyrinogen III + 2 S-adenosyl-L-methionine = precorrin-2 + 2 S-adenosyl-L-homocysteine + H(+). It carries out the reaction precorrin-2 + NAD(+) = sirohydrochlorin + NADH + 2 H(+). The enzyme catalyses siroheme + 2 H(+) = sirohydrochlorin + Fe(2+). Its pathway is cofactor biosynthesis; adenosylcobalamin biosynthesis; precorrin-2 from uroporphyrinogen III: step 1/1. The protein operates within cofactor biosynthesis; adenosylcobalamin biosynthesis; sirohydrochlorin from precorrin-2: step 1/1. It participates in porphyrin-containing compound metabolism; siroheme biosynthesis; precorrin-2 from uroporphyrinogen III: step 1/1. It functions in the pathway porphyrin-containing compound metabolism; siroheme biosynthesis; siroheme from sirohydrochlorin: step 1/1. Its pathway is porphyrin-containing compound metabolism; siroheme biosynthesis; sirohydrochlorin from precorrin-2: step 1/1. Its function is as follows. Multifunctional enzyme that catalyzes the SAM-dependent methylations of uroporphyrinogen III at position C-2 and C-7 to form precorrin-2 via precorrin-1. Then it catalyzes the NAD-dependent ring dehydrogenation of precorrin-2 to yield sirohydrochlorin. Finally, it catalyzes the ferrochelation of sirohydrochlorin to yield siroheme. This is Siroheme synthase from Hydrogenovibrio crunogenus (strain DSM 25203 / XCL-2) (Thiomicrospira crunogena).